Here is a 105-residue protein sequence, read N- to C-terminus: Large ribosomal subunit protein uL24 (105 aa).

This sequence belongs to the universal ribosomal protein uL24 family. In terms of assembly, part of the 50S ribosomal subunit.

Functionally, one of two assembly initiator proteins, it binds directly to the 5'-end of the 23S rRNA, where it nucleates assembly of the 50S subunit. In terms of biological role, one of the proteins that surrounds the polypeptide exit tunnel on the outside of the subunit. The sequence is that of Large ribosomal subunit protein uL24 from Rhizorhabdus wittichii (strain DSM 6014 / CCUG 31198 / JCM 15750 / NBRC 105917 / EY 4224 / RW1) (Sphingomonas wittichii).